Consider the following 340-residue polypeptide: Ketol-acid reductoisomerase (NADP(+)) (340 aa).

A KARI N-terminal Rossmann domain is found at methionine 1 to threonine 183. Residues phenylalanine 26–glutamine 29, serine 54, and aspartate 84–glutamine 87 each bind NADP(+). Histidine 109 is an active-site residue. Glycine 135 serves as a coordination point for NADP(+). The KARI C-terminal knotted domain maps to threonine 184 to isoleucine 329. 4 residues coordinate Mg(2+): aspartate 192, glutamate 196, glutamate 228, and glutamate 232. Residue serine 253 coordinates substrate.

It belongs to the ketol-acid reductoisomerase family. Mg(2+) serves as cofactor.

The enzyme catalyses (2R)-2,3-dihydroxy-3-methylbutanoate + NADP(+) = (2S)-2-acetolactate + NADPH + H(+). It carries out the reaction (2R,3R)-2,3-dihydroxy-3-methylpentanoate + NADP(+) = (S)-2-ethyl-2-hydroxy-3-oxobutanoate + NADPH + H(+). It functions in the pathway amino-acid biosynthesis; L-isoleucine biosynthesis; L-isoleucine from 2-oxobutanoate: step 2/4. It participates in amino-acid biosynthesis; L-valine biosynthesis; L-valine from pyruvate: step 2/4. In terms of biological role, involved in the biosynthesis of branched-chain amino acids (BCAA). Catalyzes an alkyl-migration followed by a ketol-acid reduction of (S)-2-acetolactate (S2AL) to yield (R)-2,3-dihydroxy-isovalerate. In the isomerase reaction, S2AL is rearranged via a Mg-dependent methyl migration to produce 3-hydroxy-3-methyl-2-ketobutyrate (HMKB). In the reductase reaction, this 2-ketoacid undergoes a metal-dependent reduction by NADPH to yield (R)-2,3-dihydroxy-isovalerate. The chain is Ketol-acid reductoisomerase (NADP(+)) from Campylobacter fetus subsp. fetus (strain 82-40).